Consider the following 191-residue polypeptide: Ankyrin repeat domain-containing protein 22 (191 aa).

ANK repeat units follow at residues 39 to 68 (NGDT…DVNL), 72 to 100 (KERT…MPVL), 101 to 130 (LIGY…EVNA), and 134 to 163 (DGYT…DPMI).

The polypeptide is Ankyrin repeat domain-containing protein 22 (Ankrd22) (Mus musculus (Mouse)).